Here is a 370-residue protein sequence, read N- to C-terminus: Leucine-rich repeat-containing protein 19 (370 aa).

The first 24 residues, 1-24, serve as a signal peptide directing secretion; sequence MKVTGITILFWPLSMILLSDKIQS. Over 25–270 the chain is Extracellular; sequence SKREVQCNFT…SEHEPLGKSW (246 aa). 4 N-linked (GlcNAc...) asparagine glycosylation sites follow: Asn32, Asn37, Asn62, and Asn95. 5 LRR repeats span residues 46–71, 72–95, 96–119, 120–143, and 145–168; these read KKDVTILDLSYNQITLNGTDTRVLQT, YFLLTELYLIENKVTILHNNGFGN, LSSLEILNICRNSIYVIQQGAFLG, LNKLKQLYLCQNKIEQLNADVFVP, and RSLKLLNLQGNLISYLDVPPLFHL. The LRRCT domain maps to 176–227; that stretch reads NLWNCSCSLFNLQNWLNTSNVTLENENITMCSYPNSLQSYNIKTVPHKAECH. Residues Asn179, Asn192, Asn195, Asn202, Asn251, and Asn256 are each glycosylated (N-linked (GlcNAc...) asparagine). A helical membrane pass occupies residues 271–291; sequence AFLVGVVVTVLTTSLLIFIAI. Topologically, residues 292-370 are cytoplasmic; sequence KCPIWYNILL…IDIHELCEEN (79 aa).

Interacts with TRAF2 and TRAF6. In terms of tissue distribution, expressed in renal collecting duct epithelial cells.

The protein localises to the membrane. Its activity is regulated as follows. Activated by TLR ligands such as LPS, bacterial DNA and peptidoglycan. In terms of biological role, pathogen-recognition receptor which mediates the activation of TRAF2- and TRAF6 NF-kappa-B signaling pathways and induces the expression of pro-inflammatory cytokines. In kidney, prevents infection by uropathogenic bacteria by inducing the production of cytokines, chemokines and antimicrobial substances. In gut, involved in host-microbiota interactions, plays a critical role in promoting the recruitment of immune cells and intestinal inflammation. This chain is Leucine-rich repeat-containing protein 19, found in Homo sapiens (Human).